A 381-amino-acid polypeptide reads, in one-letter code: Creatine kinase B-type (381 aa).

Ser-4 is subject to Phosphoserine. In terms of domain architecture, Phosphagen kinase N-terminal spans 11-98 (KLRFPAEDEF…FDPIIEDRHG (88 aa)). Thr-35 is modified (phosphothreonine). Lys-45 participates in a covalent cross-link: Glycyl lysine isopeptide (Lys-Gly) (interchain with G-Cter in ubiquitin). Position 72 (Val-72) interacts with creatine. A compositionally biased stretch (basic and acidic residues) spans 96 to 110 (RHGGYKPSDEHKTDL). Residues 96–123 (RHGGYKPSDEHKTDLNPDNLQGGDDLDP) form a disordered region. Residues Lys-101 and Lys-107 each participate in a glycyl lysine isopeptide (Lys-Gly) (interchain with G-Cter in ubiquitin) cross-link. Tyr-125 is subject to Phosphotyrosine. A Phosphagen kinase C-terminal domain is found at 125–367 (YVLSSRVRTG…KLLIEMEQRL (243 aa)). ATP-binding positions include 128–132 (SSRVR), Arg-130, Arg-132, and His-191. Residues 130–138 (RVRTGRSIR) form an internal MTS-like signal region. Ser-199 bears the Phosphoserine mark. Position 232 (Glu-232) interacts with creatine. Arg-236 is an ATP binding site. Position 269 is a 3'-nitrotyrosine (Tyr-269). Creatine is bound at residue Ser-285. Residue Arg-292 participates in ATP binding. Phosphoserine is present on Ser-309. ATP-binding positions include Arg-320, 320–325 (RGTGGV), and Asp-335. Thr-322 carries the post-translational modification Phosphothreonine. Lys-381 is covalently cross-linked (Glycyl lysine isopeptide (Lys-Gly) (interchain with G-Cter in ubiquitin)).

The protein belongs to the ATP:guanido phosphotransferase family. As to quaternary structure, dimer of identical or non-identical chains, which can be either B (brain type) or M (muscle type). With MM being the major form in skeletal muscle and myocardium, MB existing in myocardium, and BB existing in many tissues, especially brain. Interacts with SLC12A6 (via C-terminus); the interaction may be required for SLC12A6 potassium-chloride cotransport activity. Post-translationally, ubiquitinated by the ECS(ASB9) complex, leading to its degradation by the proteasome.

Its subcellular location is the cytoplasm. It is found in the cytosol. The protein resides in the mitochondrion. The protein localises to the cell membrane. The enzyme catalyses creatine + ATP = N-phosphocreatine + ADP + H(+). Its function is as follows. Reversibly catalyzes the transfer of phosphate between ATP and various phosphogens (e.g. creatine phosphate). Creatine kinase isoenzymes play a central role in energy transduction in tissues with large, fluctuating energy demands, such as skeletal muscle, heart, brain and spermatozoa. Acts as a key regulator of adaptive thermogenesis as part of the futile creatine cycle: localizes to the mitochondria of thermogenic fat cells and acts by mediating phosphorylation of creatine to initiate a futile cycle of creatine phosphorylation and dephosphorylation. During the futile creatine cycle, creatine and N-phosphocreatine are in a futile cycle, which dissipates the high energy charge of N-phosphocreatine as heat without performing any mechanical or chemical work. The protein is Creatine kinase B-type (CKB) of Oryctolagus cuniculus (Rabbit).